Consider the following 410-residue polypeptide: Probable 2,3-bisphosphoglycerate-independent phosphoglycerate mutase (410 aa).

Belongs to the BPG-independent phosphoglycerate mutase family. A-PGAM subfamily.

It catalyses the reaction (2R)-2-phosphoglycerate = (2R)-3-phosphoglycerate. Its pathway is carbohydrate degradation; glycolysis; pyruvate from D-glyceraldehyde 3-phosphate: step 3/5. In terms of biological role, catalyzes the interconversion of 2-phosphoglycerate and 3-phosphoglycerate. The chain is Probable 2,3-bisphosphoglycerate-independent phosphoglycerate mutase from Deinococcus radiodurans (strain ATCC 13939 / DSM 20539 / JCM 16871 / CCUG 27074 / LMG 4051 / NBRC 15346 / NCIMB 9279 / VKM B-1422 / R1).